We begin with the raw amino-acid sequence, 276 residues long: Putative ABC transporter ATP-binding protein MA_4021 (276 aa).

Positions 5-247 constitute an ABC transporter domain; it reads FDLKNISYSY…DLNLLLSTNL (243 aa). Position 38–45 (38–45) interacts with ATP; sequence GSNGSGKS.

Belongs to the ABC transporter superfamily.

It localises to the cell membrane. Functionally, probably part of an ABC transporter complex. Responsible for energy coupling to the transport system. This Methanosarcina acetivorans (strain ATCC 35395 / DSM 2834 / JCM 12185 / C2A) protein is Putative ABC transporter ATP-binding protein MA_4021.